The sequence spans 239 residues: Putative ankyrin repeat protein RBE_0489 (239 aa).

ANK repeat units follow at residues 23–52 (ISSRNLFKAVEKNNIAGTKFLLEHGISPNA), 80–109 (GIDTPLHIAANNGYTTVVKILLENGAFINA), and 113–143 (FGFTPLHSAIISSYKLSSIKLLLEYGTSLTL).

This Rickettsia bellii (strain RML369-C) protein is Putative ankyrin repeat protein RBE_0489.